The primary structure comprises 248 residues: Probable transcriptional regulatory protein Oant_1200 (248 aa).

Belongs to the TACO1 family.

The protein localises to the cytoplasm. The sequence is that of Probable transcriptional regulatory protein Oant_1200 from Brucella anthropi (strain ATCC 49188 / DSM 6882 / CCUG 24695 / JCM 21032 / LMG 3331 / NBRC 15819 / NCTC 12168 / Alc 37) (Ochrobactrum anthropi).